Here is a 1171-residue protein sequence, read N- to C-terminus: Phytochrome B (1171 aa).

Residues 1 to 19 (MASGSRATPTRSPSSARPA) are compositionally biased toward low complexity. Residues 1-53 (MASGSRATPTRSPSSARPAAPRHQHHHSQSSGGSTSRAGGGGGGGGGGGGGAA) form a disordered region. The segment covering 38–52 (AGGGGGGGGGGGGGA) has biased composition (gly residues). Residues 259–442 (DVKLLCDTVV…AFGLQLNMEL (184 aa)) form the GAF domain. Cys-364 provides a ligand contact to phytochromobilin. 2 consecutive PAS domains span residues 661-732 (VARE…LRGD) and 795-866 (DYKA…MIVL). The Histidine kinase domain occupies 943-1161 (YIYQEIKNPL…FFHIVLELPQ (219 aa)).

It belongs to the phytochrome family. Homodimer. Contains one covalently linked phytochromobilin chromophore.

In terms of biological role, regulatory photoreceptor which exists in two forms that are reversibly interconvertible by light: the Pr form that absorbs maximally in the red region of the spectrum and the Pfr form that absorbs maximally in the far-red region. Photoconversion of Pr to Pfr induces an array of morphogenic responses, whereas reconversion of Pfr to Pr cancels the induction of those responses. Pfr controls the expression of a number of nuclear genes including those encoding the small subunit of ribulose-bisphosphate carboxylase, chlorophyll A/B binding protein, protochlorophyllide reductase, rRNA, etc. It also controls the expression of its own gene(s) in a negative feedback fashion. This Oryza sativa subsp. japonica (Rice) protein is Phytochrome B (PHYB).